A 776-amino-acid polypeptide reads, in one-letter code: Microtubule-associated protein tau (776 aa).

A compositionally biased stretch (basic and acidic residues) spans 1 to 26; it reads MAEPRQEFEVMEDHAGTYGLGDRKDQ. Positions 1–591 are disordered; sequence MAEPRQEFEV…PVPMPDLKNV (591 aa). A2 is modified (N-acetylalanine). Phosphotyrosine is present on residues Y18 and Y29. K44 is covalently cross-linked (Glycyl lysine isopeptide (Lys-Gly) (interchain with G-Cter in ubiquitin)). A phosphoserine mark is found at S46 and S61. A compositionally biased stretch (polar residues) spans 61-71; sequence SETSDAKSTPT. Phosphothreonine is present on residues T69, T71, and T111. 2 stretches are compositionally biased toward basic and acidic residues: residues 179 to 189 and 207 to 216; these read EGGRHAPELLK and GGKERPGSKE. Residue S214 is modified to Phosphoserine. A compositionally biased stretch (acidic residues) spans 217-228; that stretch reads EVDEDRDVDESS. Composition is skewed to basic and acidic residues over residues 293-303 and 314-323; these read KGQDAHLEFTF and EQAHSEEHLG. The span at 324–340 shows a compositional bias: low complexity; the sequence is RAAFPGAPGEGPEARGP. Basic and acidic residues-rich tracts occupy residues 344-356 and 381-393; these read EDTK…EPSE and KSKD…DKKA. Positions 440–452 are enriched in polar residues; that stretch reads KYVSSVTPRTGSS. Over residues 455-466 the composition is skewed to basic and acidic residues; the sequence is KEMKLKGADGKT. Phosphothreonine is present on T470. R472 is subject to Omega-N-methylarginine. K480 bears the N6,N6-dimethyllysine; alternate mark. The residue at position 480 (K480) is an N6-acetyllysine; alternate. A phosphothreonine mark is found at T486, T492, and T498. S502, S526, and S530 each carry phosphoserine. The span at 517–528 shows a compositional bias: basic and acidic residues; it reads RSERGEPPKSGD. The span at 529–549 shows a compositional bias: low complexity; that stretch reads RSGYSSPGSPGTPGSRSRTPS. Y532 is subject to Phosphotyrosine. Phosphoserine is present on residues S533, S534, and S537. Phosphothreonine is present on residues T540 and T547. Phosphoserine is present on S549. T552 bears the Phosphothreonine mark. The residue at position 560 (K560) is an N6-acetyllysine. Residue T566 is modified to Phosphothreonine. Phosphoserine is present on residues S570 and S572. 4 Tau/MAP repeats span residues 579 to 609, 610 to 640, 641 to 671, and 672 to 703; these read QTAP…GGGK, VQII…GGGS, VQIV…GGGQ, and VEVK…GGGN. K589 is covalently cross-linked (Glycyl lysine isopeptide (Lys-Gly) (interchain with G-Cter in ubiquitin)). At K594 the chain carries N6-acetyllysine; alternate. K594 is modified (N6-methyllysine; alternate). K594 participates in a covalent cross-link: Glycyl lysine isopeptide (Lys-Gly) (interchain with G-Cter in ubiquitin); alternate. At S597 the chain carries Phosphoserine. A Glycyl lysine isopeptide (Lys-Gly) (interchain with G-Cter in ubiquitin) cross-link involves residue K602. An N6-acetyllysine; alternate modification is found at K616. K616 participates in a covalent cross-link: Glycyl lysine isopeptide (Lys-Gly) (interchain with G-Cter in ubiquitin); alternate. 2 positions are modified to phosphoserine: S620 and S624. N6-acetyllysine is present on K625. A Phosphoserine modification is found at S628. An N6-acetyllysine; alternate modification is found at K633. K633 participates in a covalent cross-link: Glycyl lysine isopeptide (Lys-Gly) (interchain with G-Cter in ubiquitin); alternate. Phosphoserine is present on S640. Position 646 is an N6,N6-dimethyllysine; alternate (K646). N6-acetyllysine; alternate occurs at positions 646, 652, and 656. Glycyl lysine isopeptide (Lys-Gly) (interchain with G-Cter in ubiquitin); alternate cross-links involve residues K646, K652, and K656. S659 carries the post-translational modification Phosphoserine. 3 positions are modified to N6-acetyllysine; alternate: K666, K678, and K682. Glycyl lysine isopeptide (Lys-Gly) (interchain with G-Cter in ubiquitin); alternate cross-links involve residues K666, K678, and K682. R684 carries the omega-N-methylarginine modification. Residue S687 is modified to Phosphoserine. K688 is covalently cross-linked (Glycyl lysine isopeptide (Lys-Gly) (interchain with G-Cter in ubiquitin)). Position 691 is a phosphoserine (S691). The residue at position 704 (K704) is an N6-acetyllysine; alternate. A Glycyl lysine isopeptide (Lys-Gly) (interchain with G-Cter in ubiquitin); alternate cross-link involves residue K704. K710 is covalently cross-linked (Glycyl lysine isopeptide (Lys-Gly) (interchain with G-Cter in ubiquitin)). K720 is subject to N6-acetyllysine; alternate. K720 participates in a covalent cross-link: Glycyl lysine isopeptide (Lys-Gly) (interchain with G-Cter in ubiquitin); alternate. Position 729 is a phosphotyrosine (Y729). Residues S731 and S735 each carry the phosphoserine modification. A disordered region spans residues 733–752; the sequence is VVSGDTSPRHLSNVSSTGSI. A compositionally biased stretch (polar residues) spans 736–751; the sequence is GDTSPRHLSNVSSTGS. A Phosphothreonine modification is found at T738. S739, S744, S751, and S757 each carry phosphoserine. T762 is subject to Phosphothreonine.

In terms of assembly, interacts with MARK1, MARK2, MARK3 and MARK4. Interacts with SQSTM1 when polyubiquitinated. Interacts with PSMC2 through SQSTM1. Interacts with FKBP4. Binds to CSNK1D. Interacts with SGK1. Interacts with EPM2A; the interaction dephosphorylates MAPT at Ser-396. Interacts with PIN1. Interacts with LRRK2. Interacts with LRP1, leading to endocytosis; this interaction is reduced in the presence of LRPAP1/RAP. Post-translationally, polyubiquitinated. Requires functional TRAF6 and may provoke SQSTM1-dependent degradation by the proteasome. Phosphorylation at various serine and threonine residues in S-P or T-P motifs by proline-directed protein kinases (PDPK1, CDK1, CDK5, GSK3, MAPK) (a few sites per protein in interphase, more in mitosis), and at serine residues in K-X-G-S motifs by MAP/microtubule affinity-regulating kinase (MARK1, MARK2, MARK3 or MARK4), causing detachment from microtubules, and their disassembly. Phosphorylation at Ser-597 by BRSK1 and BRSK2 in neurons affects ability to bind microtubules and plays a role in neuron polarization. Phosphorylated by PHK. Dephosphorylation at several serine and threonine residues by the serine/threonine phosphatase PPP5C. Phosphorylation at Ser-214 by SGK1 mediates microtubule depolymerization and neurite formation in hippocampal neurons.

The protein localises to the cytoplasm. The protein resides in the cytosol. Its subcellular location is the cell membrane. It is found in the cytoskeleton. It localises to the cell projection. The protein localises to the axon. The protein resides in the dendrite. Promotes microtubule assembly and stability, and might be involved in the establishment and maintenance of neuronal polarity. The C-terminus binds axonal microtubules while the N-terminus binds neural plasma membrane components, suggesting that tau functions as a linker protein between both. Axonal polarity is predetermined by tau localization (in the neuronal cell) in the domain of the cell body defined by the centrosome. The short isoforms allow plasticity of the cytoskeleton whereas the longer isoforms may preferentially play a role in its stabilization. In Pan troglodytes (Chimpanzee), this protein is Microtubule-associated protein tau (MAPT).